Consider the following 190-residue polypeptide: NADH-quinone oxidoreductase subunit B (190 aa).

Cys39, Cys40, Cys104, and Cys135 together coordinate [4Fe-4S] cluster.

It belongs to the complex I 20 kDa subunit family. As to quaternary structure, NDH-1 is composed of 14 different subunits. Subunits NuoB, C, D, E, F, and G constitute the peripheral sector of the complex. [4Fe-4S] cluster is required as a cofactor.

It localises to the cell inner membrane. The catalysed reaction is a quinone + NADH + 5 H(+)(in) = a quinol + NAD(+) + 4 H(+)(out). Its function is as follows. NDH-1 shuttles electrons from NADH, via FMN and iron-sulfur (Fe-S) centers, to quinones in the respiratory chain. The immediate electron acceptor for the enzyme in this species is believed to be a menaquinone. Couples the redox reaction to proton translocation (for every two electrons transferred, four hydrogen ions are translocated across the cytoplasmic membrane), and thus conserves the redox energy in a proton gradient. This is NADH-quinone oxidoreductase subunit B from Chlorobium chlorochromatii (strain CaD3).